The chain runs to 249 residues: MKFYKYCASGNDFVITNADRKEDRSALAKELCNRYEGIGADGFIVILPHEKYDFEWEFYNNDGSRAAMCGNGSRAAAHFAHHINKINPNMSFLTGAGIIKAKVNQDKVEVSLGKIKSVQNTFEELGKTWQLCNTGVPHLVHFCQNLDEFDTMLCQKMRQKYNANVNFVKILDENHLKVRTYERGVEDETLACGTGMGACFYLAFLNKKVQNKVKITPKSGEEVGFAYKNEELFFEGKVKYCFEANYNFF.

Substrate contacts are provided by asparagine 11 and asparagine 60. The active-site Proton donor is the cysteine 69. Substrate is bound by residues 70 to 71, asparagine 164, and 182 to 183; these read GN and ER. The Proton acceptor role is filled by cysteine 192. 193 to 194 provides a ligand contact to substrate; that stretch reads GT.

Belongs to the diaminopimelate epimerase family. As to quaternary structure, homodimer.

Its subcellular location is the cytoplasm. The catalysed reaction is (2S,6S)-2,6-diaminopimelate = meso-2,6-diaminopimelate. It functions in the pathway amino-acid biosynthesis; L-lysine biosynthesis via DAP pathway; DL-2,6-diaminopimelate from LL-2,6-diaminopimelate: step 1/1. In terms of biological role, catalyzes the stereoinversion of LL-2,6-diaminopimelate (L,L-DAP) to meso-diaminopimelate (meso-DAP), a precursor of L-lysine and an essential component of the bacterial peptidoglycan. This is Diaminopimelate epimerase from Campylobacter jejuni subsp. jejuni serotype O:2 (strain ATCC 700819 / NCTC 11168).